We begin with the raw amino-acid sequence, 391 residues long: 4-coumarate--CoA ligase (391 aa).

This sequence belongs to the ATP-dependent AMP-binding enzyme family.

The enzyme catalyses (E)-4-coumarate + ATP + CoA = (E)-4-coumaroyl-CoA + AMP + diphosphate. Converts p-coumaric acid into p-coumaryl CoA. This is necessary for the activation of the photoactive yellow protein (PYP) chromophore. The protein is 4-coumarate--CoA ligase (pcl) of Halorhodospira halophila (Ectothiorhodospira halophila).